The following is a 394-amino-acid chain: MPTIETRTEPMVINMGPQHPSMHGVLRLMVTLDGENVVDCEPVIGYLHRGMEKIAESRSNIMFVPYVSRWDYAAGMFNEAITVNAPERLADIKVPKRASYIRVIMLELNRIANHLLWLGPFLADVGAQTPFFYIFREREMIYDLFEAVSGMRFINNNYFRMGGVAADLTYGWVSKCLDFCDYFLPKVDEYERLITNNPIFIRRLDGVGTISREDAINWGLSGPMLRGSGVKWDLRRVDHYECYDDFDWEVQWETKGDCLARYYLRIREMRESVKIIKQALEHLPGGPYENLEAKRMMEGRKSEWNSFEYQFLGKKLAPTFKIPEGELYARVETGKGELGIYLIGDENVFPWRWKIRAPDFNNLQVLPQLLKGMKVADIVAILGSIDVIMGSVDR.

It belongs to the complex I 49 kDa subunit family. In terms of assembly, NDH-1 can be composed of about 15 different subunits; different subcomplexes with different compositions have been identified which probably have different functions.

The protein resides in the cellular thylakoid membrane. The enzyme catalyses a plastoquinone + NADH + (n+1) H(+)(in) = a plastoquinol + NAD(+) + n H(+)(out). The catalysed reaction is a plastoquinone + NADPH + (n+1) H(+)(in) = a plastoquinol + NADP(+) + n H(+)(out). In terms of biological role, NDH-1 shuttles electrons from an unknown electron donor, via FMN and iron-sulfur (Fe-S) centers, to quinones in the respiratory and/or the photosynthetic chain. The immediate electron acceptor for the enzyme in this species is believed to be plastoquinone. Couples the redox reaction to proton translocation, and thus conserves the redox energy in a proton gradient. Cyanobacterial NDH-1 also plays a role in inorganic carbon-concentration. The protein is NAD(P)H-quinone oxidoreductase subunit H of Acaryochloris marina (strain MBIC 11017).